Here is a 546-residue protein sequence, read N- to C-terminus: Protein phosphatase 1G (546 aa).

G2 carries N-myristoyl glycine lipidation. R22 is modified (omega-N-methylarginine). The region spanning 26–505 is the PPM-type phosphatase domain; sequence PYGFSAMQGW…DNMTCIIICF (480 aa). Residues D60 and G61 each contribute to the Mn(2+) site. Disordered regions lie at residues 116-139 and 161-328; these read QIAGRPTEDEDEKEKVADEDDVDN and GQNC…SDSG. T122 is subject to Phosphothreonine. Residues 123 to 139 show a composition bias toward acidic residues; the sequence is EDEDEKEKVADEDDVDN. The residue at position 183 (S183) is a Phosphoserine. Over residues 259–312 the composition is skewed to acidic residues; that stretch reads DSEDESDEAEEEEEDSEECSEEEDGYSSEEAENEEDEDDTEEAEEDDEEEEEEM. Position 383 is an N6-acetyllysine (K383). Mn(2+) contacts are provided by D441 and D496. Positions 512 to 546 are disordered; sequence ELQPESGKRKLEEVLSTEGAEENGNSDKKKKAKRD. A Phosphoserine modification is found at S527.

It belongs to the PP2C family. In terms of assembly, interacts with NOL3; may dephosphorylate NOL3. Requires Mg(2+) as cofactor. Mn(2+) serves as cofactor. As to expression, widely expressed. Most abundant in testis, skeletal muscle, and heart.

It is found in the cytoplasm. The protein localises to the membrane. It carries out the reaction O-phospho-L-seryl-[protein] + H2O = L-seryl-[protein] + phosphate. The enzyme catalyses O-phospho-L-threonyl-[protein] + H2O = L-threonyl-[protein] + phosphate. This chain is Protein phosphatase 1G (PPM1G), found in Homo sapiens (Human).